The sequence spans 752 residues: Translation initiation factor IF-2 (752 aa).

The span at 148-159 (KKVKDKNKKEEP) shows a compositional bias: basic and acidic residues. The tract at residues 148 to 170 (KKVKDKNKKEEPAVTPSTAPRKK) is disordered. In terms of domain architecture, tr-type G spans 250-419 (PRPPIVTVMG…ALQAEIMELK (170 aa)). Positions 259–266 (GHVDHGKT) are G1. 259-266 (GHVDHGKT) serves as a coordination point for GTP. The interval 284-288 (GITQH) is G2. Residues 305–308 (DTPG) are G3. Residues 305 to 309 (DTPGH) and 359 to 362 (NKID) contribute to the GTP site. The tract at residues 359-362 (NKID) is G4. The G5 stretch occupies residues 395–397 (SAK).

This sequence belongs to the TRAFAC class translation factor GTPase superfamily. Classic translation factor GTPase family. IF-2 subfamily.

The protein resides in the cytoplasm. In terms of biological role, one of the essential components for the initiation of protein synthesis. Protects formylmethionyl-tRNA from spontaneous hydrolysis and promotes its binding to the 30S ribosomal subunits. Also involved in the hydrolysis of GTP during the formation of the 70S ribosomal complex. The polypeptide is Translation initiation factor IF-2 (Thermodesulfovibrio yellowstonii (strain ATCC 51303 / DSM 11347 / YP87)).